Here is a 111-residue protein sequence, read N- to C-terminus: Transcription factor S (111 aa).

Residues cysteine 4, cysteine 7, cysteine 24, cysteine 27, cysteine 72, cysteine 75, cysteine 100, and cysteine 103 each coordinate Zn(2+). Residues 4-27 (CPKCGSMMMPRKENGKTVYKCSKC) form a C4-type zinc finger. The TFIIS-type zinc-finger motif lies at 68-108 (RGISCPSCGNDEAYFWILQTRSADEPATRFYKCTKCGKVWR).

It belongs to the archaeal RpoM/eukaryotic RPA12/RPB9/RPC11 RNA polymerase family.

In terms of biological role, induces RNA cleavage activity in the RNA polymerase. In its presence, the cleavage activity of the RNA polymerase truncates the RNA back to position +15 in a stepwise manner by releasing mainly dinucleotides from the 3'-end of the nascent RNA. The truncated RNAs are able to continue elongation. Involved in transcriptional proofreading and fidelity. Misincorporation of nucleotides during elongation of transcription leads to arrested elongation complexes which are rescued by TFS-promoted removal of a dinucleotide from the 3'-end. TFS is able to induce a cleavage resynthesis cycle in stalled elongation complexes (resulting from the next missing nucleotide or a reduced incorporation rate of a wrong nucleotide) preventing misincorporation and enabling proofreading in a post-incorporation manner. Pausing of elongation complexes is the main determinant of TFS-induced RNA cleavage. The protein is Transcription factor S of Sulfolobus acidocaldarius (strain ATCC 33909 / DSM 639 / JCM 8929 / NBRC 15157 / NCIMB 11770).